Here is a 145-residue protein sequence, read N- to C-terminus: UPF0201 protein LS215_1276 (145 aa).

This sequence belongs to the UPF0201 family.

The chain is UPF0201 protein LS215_1276 from Saccharolobus islandicus (strain L.S.2.15 / Lassen #1) (Sulfolobus islandicus).